We begin with the raw amino-acid sequence, 331 residues long: Ferrochelatase (331 aa).

Fe cation is bound by residues His187 and Glu286.

It belongs to the ferrochelatase family.

It is found in the cytoplasm. It carries out the reaction heme b + 2 H(+) = protoporphyrin IX + Fe(2+). Its pathway is porphyrin-containing compound metabolism; protoheme biosynthesis; protoheme from protoporphyrin-IX: step 1/1. In terms of biological role, catalyzes the ferrous insertion into protoporphyrin IX. The polypeptide is Ferrochelatase (Legionella pneumophila (strain Paris)).